Consider the following 370-residue polypeptide: D-alanine--D-alanine ligase (370 aa).

In terms of domain architecture, ATP-grasp spans 144-352 (KKIFADAGIP…YGALIERLVD (209 aa)). 177 to 232 (EEVLTYPVFVKPANLGSSVGISKATNKTELIEAMTEAFLYDRRVVVEQGVVAREIE) is an ATP binding site. Mg(2+) is bound by residues Asp-306, Glu-319, and Asn-321.

It belongs to the D-alanine--D-alanine ligase family. Mg(2+) is required as a cofactor. Requires Mn(2+) as cofactor.

The protein localises to the cytoplasm. The enzyme catalyses 2 D-alanine + ATP = D-alanyl-D-alanine + ADP + phosphate + H(+). It participates in cell wall biogenesis; peptidoglycan biosynthesis. Functionally, cell wall formation. The sequence is that of D-alanine--D-alanine ligase from Listeria innocua serovar 6a (strain ATCC BAA-680 / CLIP 11262).